The primary structure comprises 324 residues: Kelch domain-containing protein PF0436 (324 aa).

Kelch repeat units follow at residues 112-160, 254-301, and 303-323; these read EVLL…LWDG, GIYI…WDGR, and IYIV…FTPK.

This Pyrococcus furiosus (strain ATCC 43587 / DSM 3638 / JCM 8422 / Vc1) protein is Kelch domain-containing protein PF0436.